We begin with the raw amino-acid sequence, 223 residues long: ATP phosphoribosyltransferase (223 aa).

This sequence belongs to the ATP phosphoribosyltransferase family. Short subfamily. In terms of assembly, heteromultimer composed of HisG and HisZ subunits.

The protein resides in the cytoplasm. The enzyme catalyses 1-(5-phospho-beta-D-ribosyl)-ATP + diphosphate = 5-phospho-alpha-D-ribose 1-diphosphate + ATP. The protein operates within amino-acid biosynthesis; L-histidine biosynthesis; L-histidine from 5-phospho-alpha-D-ribose 1-diphosphate: step 1/9. In terms of biological role, catalyzes the condensation of ATP and 5-phosphoribose 1-diphosphate to form N'-(5'-phosphoribosyl)-ATP (PR-ATP). Has a crucial role in the pathway because the rate of histidine biosynthesis seems to be controlled primarily by regulation of HisG enzymatic activity. In Sphingopyxis alaskensis (strain DSM 13593 / LMG 18877 / RB2256) (Sphingomonas alaskensis), this protein is ATP phosphoribosyltransferase.